The sequence spans 421 residues: Synaptotagmin-12 (421 aa).

The Vesicular segment spans residues 1 to 18; sequence MAVDVTEYHLSVIKSPPG. The chain crosses the membrane as a helical span at residues 19–39; it reads WEVGVYAAGALALLGIAAVSL. The Cytoplasmic segment spans residues 40-421; sequence WKLWTSGSFP…VSMWHPVRRN (382 aa). S97 is subject to Phosphoserine; by PKA. A phosphoserine mark is found at S99 and S214. C2 domains follow at residues 152–272 and 283–416; these read TLGQ…SGWL and AVGE…SMWH.

The protein belongs to the synaptotagmin family. In terms of assembly, homodimer. Can also form heterodimers. Interacts with SYT1. Post-translationally, phosphorylation of Ser-97 is required for mossy-fiber long-term potentiation. As to expression, expressed in the brain, specifically by neurons in the hippocampus, and in the adrenal medulla (at protein level).

It localises to the cytoplasmic vesicle. It is found in the secretory vesicle. The protein localises to the synaptic vesicle membrane. Its function is as follows. Synaptic vesicle phosphoprotein that enhances spontaneous neurotransmitter release but does not effect induced neurotransmitter release. Unlike other synaptotagmins, it does not bind Ca(2+) or phospholipids. Essential for mossy-fiber long-term potentiation in the hippocampus. In Mus musculus (Mouse), this protein is Synaptotagmin-12.